A 345-amino-acid polypeptide reads, in one-letter code: MTITVAVDAMGGDVGLKVTVPASIQFLQDHPDTHLILVGDQPALEAELALHDGAVRERILIQHATQVVGMDEAPQLALKNKKDSSMRVAINLVKEGKAQAAVSAGNTGALMATARFVLKTIPGIDRPAIAKLLPNVKGTSCVLDLGANVDCTPEQLLQFGIMGSELMACLQGKANPSVGLLNIGSEDIKGNDNIKKTAELLRQSELHFYGNVEGDDICKGTTDVVVCDGFTGNVALKTAEGLAHMFAVFLREEFGRSWWTRLCALAALPVLALFKKRIDPRRYNGASLLGLRGIVVKSHGSADVTGFRYALAQACEEAGSDVIAHIADRVAKQLDNLKQSEAEAN.

The protein belongs to the PlsX family. In terms of assembly, homodimer. Probably interacts with PlsY.

It localises to the cytoplasm. It carries out the reaction a fatty acyl-[ACP] + phosphate = an acyl phosphate + holo-[ACP]. It participates in lipid metabolism; phospholipid metabolism. Functionally, catalyzes the reversible formation of acyl-phosphate (acyl-PO(4)) from acyl-[acyl-carrier-protein] (acyl-ACP). This enzyme utilizes acyl-ACP as fatty acyl donor, but not acyl-CoA. The chain is Phosphate acyltransferase from Chromobacterium violaceum (strain ATCC 12472 / DSM 30191 / JCM 1249 / CCUG 213 / NBRC 12614 / NCIMB 9131 / NCTC 9757 / MK).